A 176-amino-acid chain; its full sequence is Urease accessory protein UreE (176 aa).

The interval 134–176 (FTPEGGAYGHGRTHAHEHGHTNHHGQHHDHADHGHSHDHSHDQ) is disordered. Positions 161–176 (HDHADHGHSHDHSHDQ) are enriched in basic and acidic residues.

It belongs to the UreE family.

It localises to the cytoplasm. Its function is as follows. Involved in urease metallocenter assembly. Binds nickel. Probably functions as a nickel donor during metallocenter assembly. The protein is Urease accessory protein UreE of Ruegeria sp. (strain TM1040) (Silicibacter sp.).